The following is a 408-amino-acid chain: Branched-chain amino acid aminotransferase 2, chloroplastic (408 aa).

Residues Met-1–Cys-58 constitute a chloroplast transit peptide. Arg-152 is a pyridoxal 5'-phosphate binding site. Lys-254 functions as the Proton acceptor in the catalytic mechanism. Lys-254 carries the N6-(pyridoxal phosphate)lysine modification. Pyridoxal 5'-phosphate is bound at residue Glu-290.

Belongs to the class-IV pyridoxal-phosphate-dependent aminotransferase family. Requires pyridoxal 5'-phosphate as cofactor. Expressed in lupulin glands and leaves.

Its subcellular location is the plastid. It is found in the chloroplast. The catalysed reaction is L-isoleucine + 2-oxoglutarate = (S)-3-methyl-2-oxopentanoate + L-glutamate. It carries out the reaction L-leucine + 2-oxoglutarate = 4-methyl-2-oxopentanoate + L-glutamate. The enzyme catalyses L-valine + 2-oxoglutarate = 3-methyl-2-oxobutanoate + L-glutamate. The protein operates within amino-acid biosynthesis; L-isoleucine biosynthesis; L-isoleucine from 2-oxobutanoate: step 4/4. It participates in amino-acid biosynthesis; L-leucine biosynthesis; L-leucine from 3-methyl-2-oxobutanoate: step 4/4. Its pathway is amino-acid biosynthesis; L-valine biosynthesis; L-valine from pyruvate: step 4/4. Functionally, converts 2-oxo acids to branched-chain amino acids. Shows no kinetic preferences corresponding to anabolic or catabolic functions, but likely involved in BCAA biosynthesis. This is Branched-chain amino acid aminotransferase 2, chloroplastic from Humulus lupulus (European hop).